A 342-amino-acid chain; its full sequence is Isopentenyl-diphosphate delta-isomerase (342 aa).

12 to 13 (RK) is a substrate binding site. Residues 71-73 (AMT), serine 101, and asparagine 129 contribute to the FMN site. 101-103 (SQR) provides a ligand contact to substrate. Glutamine 163 provides a ligand contact to substrate. Glutamate 164 lines the Mg(2+) pocket. Residues lysine 195, threonine 225, 272–274 (GIR), and 293–294 (AR) contribute to the FMN site.

Belongs to the IPP isomerase type 2 family. Homooctamer. Dimer of tetramers. Requires FMN as cofactor. NADPH serves as cofactor. It depends on Mg(2+) as a cofactor.

The protein localises to the cytoplasm. It catalyses the reaction isopentenyl diphosphate = dimethylallyl diphosphate. Functionally, involved in the biosynthesis of isoprenoids. Catalyzes the 1,3-allylic rearrangement of the homoallylic substrate isopentenyl (IPP) to its allylic isomer, dimethylallyl diphosphate (DMAPP). The protein is Isopentenyl-diphosphate delta-isomerase of Mycolicibacterium gilvum (strain PYR-GCK) (Mycobacterium gilvum (strain PYR-GCK)).